Consider the following 503-residue polypeptide: ATP synthase subunit alpha (503 aa).

Residue glycine 170–threonine 177 coordinates ATP.

The protein belongs to the ATPase alpha/beta chains family. As to quaternary structure, F-type ATPases have 2 components, CF(1) - the catalytic core - and CF(0) - the membrane proton channel. CF(1) has five subunits: alpha(3), beta(3), gamma(1), delta(1), epsilon(1). CF(0) has three main subunits: a(1), b(2) and c(9-12). The alpha and beta chains form an alternating ring which encloses part of the gamma chain. CF(1) is attached to CF(0) by a central stalk formed by the gamma and epsilon chains, while a peripheral stalk is formed by the delta and b chains.

The protein resides in the cell inner membrane. The catalysed reaction is ATP + H2O + 4 H(+)(in) = ADP + phosphate + 5 H(+)(out). Functionally, produces ATP from ADP in the presence of a proton gradient across the membrane. The alpha chain is a regulatory subunit. In Thermotoga neapolitana (strain ATCC 49049 / DSM 4359 / NBRC 107923 / NS-E), this protein is ATP synthase subunit alpha.